We begin with the raw amino-acid sequence, 278 residues long: Tryptophan synthase alpha chain (278 aa).

Residues Glu-49 and Asp-60 each act as proton acceptor in the active site.

It belongs to the TrpA family. Tetramer of two alpha and two beta chains.

The enzyme catalyses (1S,2R)-1-C-(indol-3-yl)glycerol 3-phosphate + L-serine = D-glyceraldehyde 3-phosphate + L-tryptophan + H2O. It functions in the pathway amino-acid biosynthesis; L-tryptophan biosynthesis; L-tryptophan from chorismate: step 5/5. Its function is as follows. The alpha subunit is responsible for the aldol cleavage of indoleglycerol phosphate to indole and glyceraldehyde 3-phosphate. The chain is Tryptophan synthase alpha chain from Corynebacterium diphtheriae (strain ATCC 700971 / NCTC 13129 / Biotype gravis).